The primary structure comprises 170 residues: Photosystem II extrinsic protein V (170 aa).

Residues 1–34 (MNKILGIDPLKKFIFGISAFVLLFWQLNVGAANA) form the signal peptide. Heme c is bound by residues Cys-70, Cys-73, His-74, and His-125.

This sequence belongs to the cytochrome c family. PsbV subfamily. As to quaternary structure, PSII is composed of 1 copy each of membrane proteins PsbA, PsbB, PsbC, PsbD, PsbE, PsbF, PsbH, PsbI, PsbJ, PsbK, PsbL, PsbM, PsbT, PsbX, PsbY, PsbZ, Psb30/Ycf12, peripheral proteins PsbO, CyanoQ (PsbQ), PsbU, PsbV and a large number of cofactors. It forms dimeric complexes. Requires heme c as cofactor.

Its subcellular location is the cellular thylakoid membrane. Its function is as follows. One of the extrinsic, lumenal subunits of photosystem II (PSII). PSII is a light-driven water plastoquinone oxidoreductase, using light energy to abstract electrons from H(2)O, generating a proton gradient subsequently used for ATP formation. The extrinsic proteins stabilize the structure of photosystem II oxygen-evolving complex (OEC), the ion environment of oxygen evolution and protect the OEC against heat-induced inactivation. Low-potential cytochrome c that plays a role in the OEC of PSII. This Picosynechococcus sp. (strain ATCC 27264 / PCC 7002 / PR-6) (Agmenellum quadruplicatum) protein is Photosystem II extrinsic protein V.